We begin with the raw amino-acid sequence, 124 residues long: MPTIQQLVRKGRQAKTTKTKTPALKGSPQRRGVCTRVYTTTPKKPNSALRKVARVKLSSQIEVTAYIPGVGHNLQEHSIVLVRGGRVKDLPGVRYKIVRGSLDTQGVRNRKQARSRYGAKKEKS.

Residues 1–32 (MPTIQQLVRKGRQAKTTKTKTPALKGSPQRRG) are disordered. A compositionally biased stretch (basic residues) spans 9 to 18 (RKGRQAKTTK). Aspartate 89 is modified (3-methylthioaspartic acid). The tract at residues 105 to 124 (QGVRNRKQARSRYGAKKEKS) is disordered. Residues 108-118 (RNRKQARSRYG) are compositionally biased toward basic residues.

It belongs to the universal ribosomal protein uS12 family. In terms of assembly, part of the 30S ribosomal subunit. Contacts proteins S8 and S17. May interact with IF1 in the 30S initiation complex.

Its function is as follows. With S4 and S5 plays an important role in translational accuracy. Functionally, interacts with and stabilizes bases of the 16S rRNA that are involved in tRNA selection in the A site and with the mRNA backbone. Located at the interface of the 30S and 50S subunits, it traverses the body of the 30S subunit contacting proteins on the other side and probably holding the rRNA structure together. The combined cluster of proteins S8, S12 and S17 appears to hold together the shoulder and platform of the 30S subunit. The protein is Small ribosomal subunit protein uS12 of Salinispora arenicola (strain CNS-205).